The primary structure comprises 124 residues: Protein YobA (124 aa).

Positions 1-26 are cleaved as a signal peptide; that stretch reads MASTARSLRYALAILTTSLVTPSVWA. Residues His27 and His113 each contribute to the Cu cation site.

It belongs to the CopC family.

It is found in the periplasm. The protein is Protein YobA (yobA) of Escherichia coli O6:H1 (strain CFT073 / ATCC 700928 / UPEC).